The chain runs to 115 residues: Meiotically up-regulated gene 168 protein (115 aa).

The segment at 82–115 (SVSPVHTKAEEPGLGLTPMNSADFSNKIASRYRS) is disordered. Positions 99–109 (PMNSADFSNKI) are enriched in polar residues.

Its subcellular location is the nucleus. Its function is as follows. Has a role in meiosis. In Schizosaccharomyces pombe (strain 972 / ATCC 24843) (Fission yeast), this protein is Meiotically up-regulated gene 168 protein (mug168).